A 308-amino-acid polypeptide reads, in one-letter code: uncharacterized protein (308 aa).

Glutamate 59 is a catalytic residue.

Belongs to the PhzF family.

This is an uncharacterized protein from Deinococcus radiodurans (strain ATCC 13939 / DSM 20539 / JCM 16871 / CCUG 27074 / LMG 4051 / NBRC 15346 / NCIMB 9279 / VKM B-1422 / R1).